We begin with the raw amino-acid sequence, 129 residues long: Protein Turandot C (129 aa).

Residues 1–21 (MNASISLLCLALLLISPFCLG) form the signal peptide.

The protein belongs to the Turandot family.

The protein localises to the secreted. Functionally, a humoral factor that may play a role in stress tolerance. The sequence is that of Protein Turandot C from Drosophila melanogaster (Fruit fly).